Consider the following 2073-residue polypeptide: Dedicator of cytokinesis protein 11 (2073 aa).

S12 carries the post-translational modification Phosphoserine. Position 16 is a phosphothreonine (T16). S23 and S161 each carry phosphoserine. In terms of domain architecture, PH spans 165 to 272 (GVIKQGWLHK…WLITLKKIIQ (108 aa)). A Phosphotyrosine modification is found at Y248. S306, S440, and S445 each carry phosphoserine. Residues 640–818 (KNHLYVYPLQ…PLLKIKSHLE (179 aa)) form the C2 DOCK-type domain. The tract at residues 1226–1267 (FQNGHGIKREDSRGSLIPEGATGFPDQGNTGENTRQSSTRSS) is disordered. A phosphoserine mark is found at S1237 and S1240. A DOCKER domain is found at 1609-2036 (KSYASTPELR…LSDIIHEQIL (428 aa)).

Belongs to the DOCK family. In terms of assembly, interacts with CDC42.

Functionally, guanine nucleotide-exchange factor (GEF) that activates CDC42 by exchanging bound GDP for free GTP. Required for marginal zone (MZ) B-cell development, is associated with early bone marrow B-cell development, MZ B-cell formation, MZ B-cell number and marginal metallophilic macrophages morphology. Facilitates filopodia formation through the activation of CDC42. The sequence is that of Dedicator of cytokinesis protein 11 from Homo sapiens (Human).